The primary structure comprises 206 residues: Charged multivesicular body protein 2a homolog 1 (206 aa).

A disordered region spans residues 1 to 32 (MSFFGGNKKTPEQELKDSKRELSKGQREMDRE). A compositionally biased stretch (basic and acidic residues) spans 9–32 (KTPEQELKDSKRELSKGQREMDRE). Coiled coils occupy residues 12–80 (EQEL…RATK) and 114–148 (NKQT…DMFE).

It belongs to the SNF7 family. Probable core component of the endosomal sorting required for transport complex III (ESCRT-III). ESCRT-III components are thought to multimerize to form a flat lattice on the perimeter membrane of the endosome.

Its subcellular location is the endosome membrane. Its function is as follows. Probable core component of the endosomal sorting required for transport complex III (ESCRT-III) which is involved in multivesicular bodies (MVBs) formation and sorting of endosomal cargo proteins into MVBs. MVBs contain intraluminal vesicles (ILVs) that are generated by invagination and scission from the limiting membrane of the endosome and are delivered to lysosomes enabling degradation of membrane proteins. This Dictyostelium discoideum (Social amoeba) protein is Charged multivesicular body protein 2a homolog 1 (chmp2a1).